The sequence spans 517 residues: Salicyloyl-CoA 5-hydroxylase (517 aa).

The protein belongs to the aromatic-ring hydroxylase family. KMO subfamily.

It catalyses the reaction 2-hydroxybenzoyl-CoA + NADH + O2 + H(+) = 2,5-dihydroxybenzoyl-CoA + NAD(+) + H2O. Involved in the degradation of salicylate via a pathway involving coenzyme A derivative. Catalyzes the aromatic hydroxylation of salicylyl-CoA to yield gentisyl-CoA. This Streptomyces sp protein is Salicyloyl-CoA 5-hydroxylase.